Here is a 329-residue protein sequence, read N- to C-terminus: COP9 signalosome complex subunit 6 (329 aa).

In terms of domain architecture, MPN spans 44 to 175 (TRVKAQAACS…VTIYESELHV (132 aa)).

It belongs to the peptidase M67A family. CSN6 subfamily. Component of the CSN complex, probably composed of CSN1, CSN2, CSN3, CSN4, CSN5, CSN6, CSN7 and CSN8.

Its function is as follows. Component of the COP9 signalosome complex (CSN), a complex involved in various cellular and developmental processes such as photomorphogenesis and response to hormones. The CSN complex is an essential regulator of the ubiquitin (Ubl) conjugation pathway by mediating the deneddylation of the cullin subunits of SCF-type E3 ligase complexes, leading to decrease the Ubl ligase activity of SCF. Involved in early response to iron deficiency. In Oryza sativa subsp. japonica (Rice), this protein is COP9 signalosome complex subunit 6.